The primary structure comprises 336 residues: Nuclear envelope-associated protein 1 (336 aa).

Residues cysteine 125 to lysine 261 are a coiled coil. A Bipartite nuclear localization signal motif is present at residues lysine 240–lysine 261. Residues phenylalanine 313–leucine 330 traverse the membrane as a helical segment.

Forms heteromers with NEAP2 and NEAP3. Interacts with SUN1; SUN2 and bZIP18.

It localises to the nucleus inner membrane. Its subcellular location is the nucleus. It is found in the nucleoplasm. The protein is Nuclear envelope-associated protein 1 of Arabidopsis thaliana (Mouse-ear cress).